An 89-amino-acid chain; its full sequence is Putative regulatory protein CPE1749 (89 aa).

This sequence belongs to the RemA family.

In Clostridium perfringens (strain 13 / Type A), this protein is Putative regulatory protein CPE1749.